A 388-amino-acid polypeptide reads, in one-letter code: Trichodiene synthase (388 aa).

Residues Asp109, Glu173, Asn234, Ser238, Glu242, and Asp248 each contribute to the Mg(2+) site. An aspartate-rich domain region spans residues Asp109 to Glu113.

The protein belongs to the trichodiene synthase family. Mg(2+) is required as a cofactor. The cofactor is Mn(2+).

It catalyses the reaction (2E,6E)-farnesyl diphosphate = trichodiene + diphosphate. Its pathway is sesquiterpene biosynthesis; trichothecene biosynthesis. Functionally, trichodiene synthase; part of the gene cluster that mediates the production of the antimicrobial trichothecene harzianum A (HA) that plays a role in Botrytis cinerea antagonistic activity and plant defense priming. The biosynthesis of harzianum A begins with the cyclization of farnesyl diphosphate to trichodiene and is catalyzed by the trichodiene synthase TRI5. Trichodiene undergoes a series of oxygenations catalyzed by the cytochrome P450 monooxygenase TRI4. TRI4 controls the addition of 3 oxygens at C-2, C-11, and the C-12, C-13-epoxide to form the intermediate isotrichodiol. Isotrichodiol then undergoes a non-enzymatic isomerization and cyclization to form 12,13-epoxytrichothec-9-ene (EPT) which is further converted to trichodermol by the cytochrome P450 monooxygenase TRI11 via C-4 hydroxylation. The last step of HA synthesis is esterification of an octatriendioyl moiety to the C-4 oxygen of trichodermol. The octatriendioyl moiety is probably produced by the polyketide synthase TRI17 and the esterification performed by the trichothecene O-acetyltransferase TRI3. The polypeptide is Trichodiene synthase (Trichoderma arundinaceum).